Here is a 142-residue protein sequence, read N- to C-terminus: MIRVMATGVFDILHLGHIHYLKESKKLGDELVVVVARDSTARNNGKIPIFDENSRLALISELKVVDRAILGHEGDMMKTVIEVKPDIITLGYDQKFDEAELQSKINKLGITVKIVRISKYDGQLNSSSSVRKKIMELIGERY.

Residues 9 to 10 (VF), 14 to 17 (HLGH), aspartate 93, and tyrosine 120 contribute to the ATP site.

It belongs to the archaeal FAD synthase family. As to quaternary structure, homodimer. A divalent metal cation serves as cofactor.

It catalyses the reaction FMN + ATP + H(+) = FAD + diphosphate. It functions in the pathway cofactor biosynthesis; FAD biosynthesis; FAD from FMN: step 1/1. In terms of biological role, catalyzes the transfer of the AMP portion of ATP to flavin mononucleotide (FMN) to produce flavin adenine dinucleotide (FAD) coenzyme. The protein is FAD synthase (ribL) of Thermoplasma volcanium (strain ATCC 51530 / DSM 4299 / JCM 9571 / NBRC 15438 / GSS1).